A 265-amino-acid polypeptide reads, in one-letter code: GTP cyclohydrolase FolE2 (265 aa).

The protein belongs to the GTP cyclohydrolase IV family.

The enzyme catalyses GTP + H2O = 7,8-dihydroneopterin 3'-triphosphate + formate + H(+). The protein operates within cofactor biosynthesis; 7,8-dihydroneopterin triphosphate biosynthesis; 7,8-dihydroneopterin triphosphate from GTP: step 1/1. Its function is as follows. Converts GTP to 7,8-dihydroneopterin triphosphate. This chain is GTP cyclohydrolase FolE2, found in Bordetella bronchiseptica (strain ATCC BAA-588 / NCTC 13252 / RB50) (Alcaligenes bronchisepticus).